A 410-amino-acid chain; its full sequence is Peptidase T (410 aa).

His79 is a Zn(2+) binding site. The active site involves Asp81. Asp142 provides a ligand contact to Zn(2+). Glu176 acts as the Proton acceptor in catalysis. Zn(2+) contacts are provided by Glu177, Asp199, and His381.

The protein belongs to the peptidase M20B family. It depends on Zn(2+) as a cofactor.

It localises to the cytoplasm. It carries out the reaction Release of the N-terminal residue from a tripeptide.. In terms of biological role, cleaves the N-terminal amino acid of tripeptides. This is Peptidase T from Listeria monocytogenes serotype 4a (strain HCC23).